Consider the following 790-residue polypeptide: Penicillin-binding protein 1A (790 aa).

Residues 1-20 lie on the Cytoplasmic side of the membrane; it reads MANVRKRRKKKNEHKALRLT. The helical; Signal-anchor for type II membrane protein transmembrane segment at 21–41 threads the bilayer; sequence FITLLMVFLFSCVAAAGVGLA. Residues 42–790 lie on the Extracellular side of the membrane; it reads MIKAAPPLDV…RKRKMIKPQI (749 aa). The segment at 61 to 230 is transglycosylase; the sequence is SVIYDDKNKL…PQSPSTFYNA (170 aa). E100 acts as the Proton donor; for transglycosylase activity in catalysis. Positions 363–656 are transpeptidase; it reads ASVSIVDYKT…AALIWKLIMG (294 aa). S402 serves as the catalytic Acyl-ester intermediate; for transpeptidase activity. The disordered stretch occupies residues 720–790; that stretch reads NKDKDDDDDD…RKRKMIKPQI (71 aa). The segment covering 724–740 has biased composition (acidic residues); sequence DDDDDDKDKDKEDEEEN. The segment covering 741-779 has biased composition (basic and acidic residues); the sequence is KDEKNEDKKEAKDNTKNKDKDKKKDNDRKIDMDKKPDSS. Positions 780 to 790 are enriched in basic residues; the sequence is KRKRKMIKPQI.

It in the N-terminal section; belongs to the glycosyltransferase 51 family. This sequence in the C-terminal section; belongs to the transpeptidase family.

Its subcellular location is the cell membrane. The enzyme catalyses [GlcNAc-(1-&gt;4)-Mur2Ac(oyl-L-Ala-gamma-D-Glu-L-Lys-D-Ala-D-Ala)](n)-di-trans,octa-cis-undecaprenyl diphosphate + beta-D-GlcNAc-(1-&gt;4)-Mur2Ac(oyl-L-Ala-gamma-D-Glu-L-Lys-D-Ala-D-Ala)-di-trans,octa-cis-undecaprenyl diphosphate = [GlcNAc-(1-&gt;4)-Mur2Ac(oyl-L-Ala-gamma-D-Glu-L-Lys-D-Ala-D-Ala)](n+1)-di-trans,octa-cis-undecaprenyl diphosphate + di-trans,octa-cis-undecaprenyl diphosphate + H(+). It catalyses the reaction Preferential cleavage: (Ac)2-L-Lys-D-Ala-|-D-Ala. Also transpeptidation of peptidyl-alanyl moieties that are N-acyl substituents of D-alanine.. Its pathway is cell wall biogenesis; peptidoglycan biosynthesis. Functionally, cell wall formation. Synthesis of cross-linked peptidoglycan from the lipid intermediates. The enzyme has a penicillin-insensitive transglycosylase N-terminal domain (formation of linear glycan strands) and a penicillin-sensitive transpeptidase C-terminal domain (cross-linking of the peptide subunits). This Clostridium tetani (strain Massachusetts / E88) protein is Penicillin-binding protein 1A (pbpA).